Consider the following 91-residue polypeptide: Small ribosomal subunit protein bS20 (91 aa).

The tract at residues 1-23 (MANTPSAKKRAKQAEKRRSHNAS) is disordered. Residues 7 to 20 (AKKRAKQAEKRRSH) show a composition bias toward basic residues.

Belongs to the bacterial ribosomal protein bS20 family.

In terms of biological role, binds directly to 16S ribosomal RNA. The polypeptide is Small ribosomal subunit protein bS20 (Pseudomonas aeruginosa (strain LESB58)).